A 464-amino-acid polypeptide reads, in one-letter code: DNA primase DnaG (464 aa).

One can recognise a Toprim domain in the interval 171 to 245; that stretch reads DTIIIVEGRA…DIDYVARAPK (75 aa). Mg(2+) is bound by residues E177, D219, and D221.

This sequence belongs to the archaeal DnaG primase family. In terms of assembly, forms a ternary complex with MCM helicase and DNA. Mg(2+) is required as a cofactor.

The enzyme catalyses ssDNA + n NTP = ssDNA/pppN(pN)n-1 hybrid + (n-1) diphosphate.. Functionally, RNA polymerase that catalyzes the synthesis of short RNA molecules used as primers for DNA polymerase during DNA replication. The chain is DNA primase DnaG from Methanococcus aeolicus (strain ATCC BAA-1280 / DSM 17508 / OCM 812 / Nankai-3).